The primary structure comprises 606 residues: Electron transfer flavoprotein-ubiquinone oxidoreductase, mitochondrial (606 aa).

59–73 (VVIVGAGPSGLSTAI) lines the FAD pocket. A helical transmembrane segment spans residues 448–468 (PSLHWGTIPGLIYGALEMYIF). [4Fe-4S] cluster contacts are provided by Cys551, Cys575, Cys578, and Cys581.

Belongs to the ETF-QO/FixC family. As to quaternary structure, monomer. It depends on [4Fe-4S] cluster as a cofactor. The cofactor is FAD.

The protein resides in the mitochondrion inner membrane. The enzyme catalyses a ubiquinone + reduced [electron-transfer flavoprotein] = a ubiquinol + oxidized [electron-transfer flavoprotein] + H(+). In terms of biological role, accepts electrons from ETF and reduces ubiquinone. The protein is Electron transfer flavoprotein-ubiquinone oxidoreductase, mitochondrial (etfdh) of Dictyostelium discoideum (Social amoeba).